The primary structure comprises 363 residues: Fructose-bisphosphate aldolase C-B (363 aa).

Substrate-binding residues include R56 and K147. E188 acts as the Proton acceptor in catalysis. Residue K230 is the Schiff-base intermediate with dihydroxyacetone-P of the active site.

The protein belongs to the class I fructose-bisphosphate aldolase family. In terms of assembly, homotetramer.

The enzyme catalyses beta-D-fructose 1,6-bisphosphate = D-glyceraldehyde 3-phosphate + dihydroxyacetone phosphate. It functions in the pathway carbohydrate degradation; glycolysis; D-glyceraldehyde 3-phosphate and glycerone phosphate from D-glucose: step 4/4. This chain is Fructose-bisphosphate aldolase C-B (aldocb), found in Danio rerio (Zebrafish).